The sequence spans 74 residues: ATP synthase subunit c (74 aa).

The next 2 membrane-spanning stretches (helical) occupy residues Phe-8 to Ile-28 and Ile-52 to Ile-72.

Belongs to the ATPase C chain family. F-type ATPases have 2 components, F(1) - the catalytic core - and F(0) - the membrane proton channel. F(1) has five subunits: alpha(3), beta(3), gamma(1), delta(1), epsilon(1). F(0) has three main subunits: a(1), b(2) and c(10-14). The alpha and beta chains form an alternating ring which encloses part of the gamma chain. F(1) is attached to F(0) by a central stalk formed by the gamma and epsilon chains, while a peripheral stalk is formed by the delta and b chains.

Its subcellular location is the cell inner membrane. Functionally, f(1)F(0) ATP synthase produces ATP from ADP in the presence of a proton or sodium gradient. F-type ATPases consist of two structural domains, F(1) containing the extramembraneous catalytic core and F(0) containing the membrane proton channel, linked together by a central stalk and a peripheral stalk. During catalysis, ATP synthesis in the catalytic domain of F(1) is coupled via a rotary mechanism of the central stalk subunits to proton translocation. Key component of the F(0) channel; it plays a direct role in translocation across the membrane. A homomeric c-ring of between 10-14 subunits forms the central stalk rotor element with the F(1) delta and epsilon subunits. In Rickettsia conorii (strain ATCC VR-613 / Malish 7), this protein is ATP synthase subunit c.